The sequence spans 715 residues: ABC transporter F family member 3 (715 aa).

T2 bears the N-acetylthreonine mark. Residues V96–P118 form a disordered region. 2 consecutive ABC transporter domains span residues I175–Q436 and I504–S713. ATP-binding positions include G207–T214 and G537–S544.

The protein belongs to the ABC transporter superfamily. ABCF family. EF3 (TC 3.A.1.121) subfamily.

This Arabidopsis thaliana (Mouse-ear cress) protein is ABC transporter F family member 3 (ABCF3).